We begin with the raw amino-acid sequence, 203 residues long: N-(5'-phosphoribosyl)anthranilate isomerase (203 aa).

Belongs to the TrpF family.

It catalyses the reaction N-(5-phospho-beta-D-ribosyl)anthranilate = 1-(2-carboxyphenylamino)-1-deoxy-D-ribulose 5-phosphate. It participates in amino-acid biosynthesis; L-tryptophan biosynthesis; L-tryptophan from chorismate: step 3/5. This Sulfurihydrogenibium sp. (strain YO3AOP1) protein is N-(5'-phosphoribosyl)anthranilate isomerase.